The primary structure comprises 320 residues: Nucleotide-binding protein Psyc_0118 (320 aa).

Position 32-39 (32-39 (GRSGSGKT)) interacts with ATP. 82–85 (DIRT) lines the GTP pocket.

The protein belongs to the RapZ-like family.

Its function is as follows. Displays ATPase and GTPase activities. This chain is Nucleotide-binding protein Psyc_0118, found in Psychrobacter arcticus (strain DSM 17307 / VKM B-2377 / 273-4).